Here is a 289-residue protein sequence, read N- to C-terminus: Diacylglycerol pyrophosphate phosphatase 1 (289 aa).

The Vacuolar portion of the chain corresponds to 1–21 (MNRVSFIKTPFNIGAKWRLED). The helical transmembrane segment at 22–42 (VFLLIIMILLNYPVYYQQPFE) threads the bilayer. Residues 43-65 (RQFYINDLTISHPYATTERVNNN) are Cytoplasmic-facing. A helical membrane pass occupies residues 66-86 (MLFVYSFVVPSLTILIIGSIL). At 87 to 92 (ADRRHL) the chain is on the vacuolar side. A helical transmembrane segment spans residues 93–113 (IFILYTSLLGLSLAWFSTSFF). Topologically, residues 114–172 (TNFIKNWIGRLRPDFLDRCQPVEGLPLDTLFTAKDVCTTKNHERLLDGFRTTPSGHSSE) are cytoplasmic. The tract at residues 118 to 126 (KNWIGRLRP) is phosphatase sequence motif I. The interval 166-169 (PSGH) is phosphatase sequence motif II. The next 2 helical transmembrane spans lie at 173 to 193 (SFAG…TESP) and 194 to 214 (LMPL…ALIA). Residues 215–222 (LSRTQDYR) are Cytoplasmic-facing. The tract at residues 216–227 (SRTQDYRHHFVD) is phosphatase sequence motif III. The chain crosses the membrane as a helical span at residues 223 to 243 (HHFVDVILGSMLGYIMAHFFY). Topologically, residues 244–289 (RRIFPPIDDPLPFKPLMDDSDVTLEEAVTHQRIPDEELHPLSDEGM) are vacuolar. Ser285 is subject to Phosphoserine.

Belongs to the PA-phosphatase related phosphoesterase family.

The protein resides in the vacuole membrane. It carries out the reaction a 1,2-diacyl-sn-glycerol 3-diphosphate + H2O = a 1,2-diacyl-sn-glycero-3-phosphate + phosphate + H(+). The catalysed reaction is a 1,2-diacyl-sn-glycero-3-phosphate + H2O = a 1,2-diacyl-sn-glycerol + phosphate. The enzyme catalyses a 1-acyl-sn-glycero-3-phosphate + H2O = a 1-acyl-sn-glycerol + phosphate. Inhibited by sodium fluoride (NaF) and pyrophosphate. Strongly inhibited by manganese ion and, to a lower extent, by magnesium and calcium ions. Also inhibited by Cu(2+) ion. In an indirect manner, it is also inhibited by the zinc ion which is able to form a complex with DGPP and prevent the enzyme from removing the phosphate from the substrate. Not inhibited by N-ethylmaleimide. Its function is as follows. Catalyzes the dephosphorylation of diacylglycerol diphosphate (DGPP) to phosphatidate (PA) and the subsequent dephosphorylation of PA to diacylglycerol (DAG). Together with LPP1, regulates intracellular DGPP and PA levels, which are phospholipid molecules believed to play a signaling role in stress response. Can also use lysophosphatidic acid (LPA) and phosphatidylglycerophosphate as substrates. Substrate preference is DGPP &gt; LPA &gt; PA. Activity is independent of a divalent cation ion and insensitive to inhibition by N-ethylmaleimide. The polypeptide is Diacylglycerol pyrophosphate phosphatase 1 (DPP1) (Saccharomyces cerevisiae (strain ATCC 204508 / S288c) (Baker's yeast)).